We begin with the raw amino-acid sequence, 784 residues long: Toll-like receptor 2 (784 aa).

Residues 1–24 (MLRALWLFWILVAITVLFSKRCSA) form the signal peptide. Over 25–587 (QESLSCDASG…ARPSVLECHQ (563 aa)) the chain is Extracellular. Cys-30 and Cys-36 are oxidised to a cystine. 19 LRR repeats span residues 54–77 (MKSL…ACAN), 78–101 (LQVL…SLGS), 102–125 (LEHL…PLSS), 126–150 (LKYL…NLTN), 151–175 (LQTL…GLTS), 176–199 (LNEL…SIRD), 200–223 (IHHL…ILSS), 224–250 (VRYL…VSSP), 251–278 (MKKL…YILE), 279–308 (LSEV…ELGK), 309–337 (VETV…LLEK), 338–361 (VKRI…HLKS), 362–388 (LEFL…AWPS), 389–414 (LQTL…TLKN), 415–437 (LTSL…WPEK), 438–457 (MRFL…CIPQ), 458–478 (TLEV…FLPR), 479–500 (LQEL…LFPV), and 501–524 (LLVM…SFPK). An N-linked (GlcNAc...) asparagine glycan is attached at Asn-147. Cys-353 and Cys-382 form a disulfide bridge. Asn-414 carries an N-linked (GlcNAc...) asparagine glycan. Residues Cys-432 and Cys-454 are joined by a disulfide bond. Asn-442 carries N-linked (GlcNAc...) asparagine glycosylation. The LRRCT domain occupies 525-576 (LETLEAGDNHFVCSCELLSFTMETPALAQILVDWPDSYLCDSPPRLHGHRLQ). Residues 588–608 (AALVSGVCCALLLLILLVGAL) traverse the membrane as a helical segment. Residues 609 to 784 (CHHFHGLWYL…WVNLRTAIKS (176 aa)) lie on the Cytoplasmic side of the membrane. The region spanning 639–782 (VCYDAFVSYS…VFWVNLRTAI (144 aa)) is the TIR domain. Lys-754 is covalently cross-linked (Glycyl lysine isopeptide (Lys-Gly) (interchain with G-Cter in ubiquitin)). The ATG16L1-binding motif motif lies at 761-778 (YLEWPLDEGQQEVFWVNL).

It belongs to the Toll-like receptor family. As to quaternary structure, interacts with LY96, TLR1 and TLR6 (via extracellular domain). TLR2 seems to exist in heterodimers with either TLR1 or TLR6 before stimulation by the ligand. The heterodimers form bigger oligomers in response to their corresponding ligands as well as further heterotypic associations with other receptors such as CD14 and/or CD36. Binds MYD88 (via TIR domain). Interacts with TICAM1. Interacts with CNPY3. Interacts with ATG16L1. Interacts with non-modified M.tuberculosis protein MPT83. Interacts with PPP1R11. Interacts with TIRAP. In terms of assembly, (Microbial infection) Interacts with Staphylococcus aureus protein SSL3; this interaction inhibits TLR2-mediated cytokine production. (Microbial infection) Interacts with Toxoplasma gondii micronemal protein 1 (MIC1); the interaction promotes activation of bone marrow-derived dendritic cells and macrophages. Interacts with Toxoplasma gondii micronemal protein 4 (MIC4); the interaction promotes activation of bone marrow-derived dendritic cells and macrophages. Ubiquitinated at Lys-754 by PPP1R11, leading to its degradation. Deubiquitinated by USP2. In terms of processing, glycosylation of Asn-442 is critical for secretion of the N-terminal ectodomain of TLR2. Detected in a macrophage cell line, smooth muscle, lung, spleen, thymus, brain and adipose tissue. Cell surface expression detected in lung alveolar macrophages, dendritic macrophages and at lower levels in lung macrophages (at protein level).

It localises to the cell membrane. It is found in the cytoplasmic vesicle. Its subcellular location is the phagosome membrane. The protein resides in the membrane raft. Cooperates with LY96 to mediate the innate immune response to bacterial lipoproteins and other microbial cell wall components. Cooperates with TLR1 or TLR6 to mediate the innate immune response to bacterial lipoproteins or lipopeptides. Acts via MYD88 and TRAF6, leading to NF-kappa-B activation, cytokine secretion and the inflammatory response. May also promote apoptosis in response to lipoproteins. Forms activation clusters composed of several receptors depending on the ligand, these clusters trigger signaling from the cell surface and subsequently are targeted to the Golgi in a lipid-raft dependent pathway. Forms the cluster TLR2:TLR6:CD14:CD36 in response to diacylated lipopeptides and TLR2:TLR1:CD14 in response to triacylated lipopeptides. Recognizes M.tuberculosis major T-antigen EsxA (ESAT-6) which inhibits downstream MYD88-dependent signaling. Acts as the major receptor for M.tuberculosis lipoproteins LprA, LprG, LpqH and PhoS1 (pstS1), in conjunction with TLR1 and for some but not all lipoproteins CD14 and/or CD36. The lipoproteins act as agonists to modulate antigen presenting cell functions in response to the pathogen. Recombinant MPT83 from M.tuberculosis stimulates secretion of cytokines (TNF-alpha, IL-6 and IL-12p40) by mouse macrophage cell lines in a TLR2-dependent fashion, which leads to increased host innate immunity responses against the bacterium. Lung macrophages which express low levels of TLR2 respond poorly to stimulation by M.tuberculosis LpqH. Required for normal uptake of M.tuberculosis, a process that is inhibited by M.tuberculosis LppM. Interacts with TICAM2. Functionally, (Microbial infection) Mediates activation of bone marrow-derived dendritic cells and macrophages, and production of pro-inflammatory cytokines, such as IL12 (IL12B/IL12A), triggered by Toxoplasma gondii micronemal protein 4 (MIC4) and micronemal protein 1 (MIC1). The protein is Toll-like receptor 2 (Tlr2) of Mus musculus (Mouse).